Consider the following 361-residue polypeptide: Homeobox protein knotted-1-like 6 (361 aa).

The disordered stretch occupies residues 11–48; that stretch reads VGASGVHGGHQHQHHHHPWGSSLSAIVAPPPPPQLQQQ. Positions 19 to 28 are enriched in basic residues; the sequence is GHQHQHHHHP. The ELK domain occupies 242 to 262; sequence ELKHHLLKKYSGYLSSLKQEL. The homeobox; TALE-type DNA-binding region spans 263–326; it reads SKKKKKGKLP…NQRKRHWKPS (64 aa).

The protein belongs to the TALE/KNOX homeobox family. In terms of assembly, interacts with FTIP7. Expressed predominantly in shoot apices. Also found to a lesser extent in glumes.

Its subcellular location is the nucleus. The protein localises to the cytoplasm. Functionally, transcription factor that regulates genes involved in development. May be involved in shoot formation during embryogenesis. Overexpression in transgenic plants causes altered leaf morphology. Regulates anther dehiscence via direct repression of the auxin biosynthetic gene YUCCA4. Binds to the DNA sequence 5'-TGAC-3' in the promoter of the YUCCA4 gene and represses its activity during anther development. Reduction of auxin levels at late stage of anther development, after meiosis of microspore mother cells, is necessary for normal anther dehiscence and seed setting. This chain is Homeobox protein knotted-1-like 6 (OSH1), found in Oryza sativa subsp. japonica (Rice).